Consider the following 496-residue polypeptide: NADP-dependent glyceraldehyde-3-phosphate dehydrogenase (496 aa).

Residues Arg-116 and 169–170 (NY) each bind substrate. Lys-192, Thr-195, and Asp-230 together coordinate NADP(+). 245-249 (GGDTG) serves as a coordination point for NAD(+). The active-site Proton acceptor is the Glu-264. 297 to 299 (RCT) is a binding site for substrate. Cys-298 serves as the catalytic Nucleophile. Position 391 (Glu-391) interacts with NADP(+). Position 451 (Arg-451) interacts with substrate.

This sequence belongs to the aldehyde dehydrogenase family.

It is found in the cytoplasm. It localises to the cytosol. The enzyme catalyses D-glyceraldehyde 3-phosphate + NADP(+) + H2O = (2R)-3-phosphoglycerate + NADPH + 2 H(+). Competitive inhibition by NADPH, 3-phospho-D-glycerate and ATP. Important as a means of generating NADPH for biosynthetic reactions. May be a main source of cytosolic NADPH for mannitol biosynthesis in leaves. The chain is NADP-dependent glyceraldehyde-3-phosphate dehydrogenase from Apium graveolens (Celery).